We begin with the raw amino-acid sequence, 307 residues long: Predicted GPI-anchored protein 44 (307 aa).

The first 22 residues, 1–22 (MLSTNNLLILLIFSFLITNVKS), serve as a signal peptide directing secretion. N-linked (GlcNAc...) asparagine glycosylation is found at N146 and N217. The disordered stretch occupies residues 232 to 261 (TPQPLLETPSQESSAPNIDSTTPTTIDNTV). Over residues 239 to 254 (TPSQESSAPNIDSTTP) the composition is skewed to polar residues. Residue G286 is the site of GPI-anchor amidated glycine attachment. A propeptide spans 287–307 (GAMGYPSISVALGLVFIAYLV) (removed in mature form).

Its subcellular location is the cell membrane. In Candida albicans (strain SC5314 / ATCC MYA-2876) (Yeast), this protein is Predicted GPI-anchored protein 44 (PGA44).